Consider the following 152-residue polypeptide: Superoxide dismutase [Cu-Zn] 4AP (152 aa).

Cu cation-binding residues include H45, H47, and H62. Cysteines 56 and 145 form a disulfide. The Zn(2+) site is built by H62, H70, H79, and D82. H119 provides a ligand contact to Cu cation.

It belongs to the Cu-Zn superoxide dismutase family. As to quaternary structure, homodimer. It depends on Cu cation as a cofactor. The cofactor is Zn(2+).

It localises to the cytoplasm. The catalysed reaction is 2 superoxide + 2 H(+) = H2O2 + O2. Destroys radicals which are normally produced within the cells and which are toxic to biological systems. The chain is Superoxide dismutase [Cu-Zn] 4AP (SODCC.2) from Zea mays (Maize).